A 567-amino-acid polypeptide reads, in one-letter code: Urease subunit alpha (567 aa).

Residues 128–567 form the Urease domain; it reads GGVDTHVHYI…LPLAQRYHLF (440 aa). 3 residues coordinate Ni(2+): H133, H135, and K216. K216 carries the N6-carboxylysine modification. Residue H218 participates in substrate binding. Ni(2+) is bound by residues H245 and H271. H319 serves as the catalytic Proton donor. D359 serves as a coordination point for Ni(2+).

This sequence belongs to the metallo-dependent hydrolases superfamily. Urease alpha subunit family. Heterotrimer of UreA (gamma), UreB (beta) and UreC (alpha) subunits. Three heterotrimers associate to form the active enzyme. It depends on Ni cation as a cofactor. In terms of processing, carboxylation allows a single lysine to coordinate two nickel ions.

It is found in the cytoplasm. The catalysed reaction is urea + 2 H2O + H(+) = hydrogencarbonate + 2 NH4(+). It functions in the pathway nitrogen metabolism; urea degradation; CO(2) and NH(3) from urea (urease route): step 1/1. The sequence is that of Urease subunit alpha from Pseudoalteromonas translucida (strain TAC 125).